Reading from the N-terminus, the 199-residue chain is Protein-methionine-sulfoxide reductase heme-binding subunit MsrQ (199 aa).

6 consecutive transmembrane segments (helical) span residues 8 to 28, 54 to 74, 82 to 102, 116 to 136, 149 to 169, and 171 to 191; these read IAWL…WLFW, FLLA…PLLI, LWCF…ELGI, PYLT…ATST, LLHN…LWSV, and IVSP…ACRY.

Belongs to the MsrQ family. As to quaternary structure, heterodimer of a catalytic subunit (MsrP) and a heme-binding subunit (MsrQ). FMN serves as cofactor. Heme b is required as a cofactor.

Its subcellular location is the cell inner membrane. Functionally, part of the MsrPQ system that repairs oxidized periplasmic proteins containing methionine sulfoxide residues (Met-O), using respiratory chain electrons. Thus protects these proteins from oxidative-stress damage caused by reactive species of oxygen and chlorine generated by the host defense mechanisms. MsrPQ is essential for the maintenance of envelope integrity under bleach stress, rescuing a wide series of structurally unrelated periplasmic proteins from methionine oxidation. MsrQ provides electrons for reduction to the reductase catalytic subunit MsrP, using the quinone pool of the respiratory chain. This is Protein-methionine-sulfoxide reductase heme-binding subunit MsrQ from Klebsiella pneumoniae (strain 342).